The chain runs to 241 residues: Biosynthetic peptidoglycan transglycosylase (241 aa).

Residues 18–38 form a helical membrane-spanning segment; that stretch reads GVIGIIALWMAGILIFAFLPV.

It belongs to the glycosyltransferase 51 family.

The protein localises to the cell inner membrane. The enzyme catalyses [GlcNAc-(1-&gt;4)-Mur2Ac(oyl-L-Ala-gamma-D-Glu-L-Lys-D-Ala-D-Ala)](n)-di-trans,octa-cis-undecaprenyl diphosphate + beta-D-GlcNAc-(1-&gt;4)-Mur2Ac(oyl-L-Ala-gamma-D-Glu-L-Lys-D-Ala-D-Ala)-di-trans,octa-cis-undecaprenyl diphosphate = [GlcNAc-(1-&gt;4)-Mur2Ac(oyl-L-Ala-gamma-D-Glu-L-Lys-D-Ala-D-Ala)](n+1)-di-trans,octa-cis-undecaprenyl diphosphate + di-trans,octa-cis-undecaprenyl diphosphate + H(+). It participates in cell wall biogenesis; peptidoglycan biosynthesis. Functionally, peptidoglycan polymerase that catalyzes glycan chain elongation from lipid-linked precursors. The protein is Biosynthetic peptidoglycan transglycosylase of Yersinia pseudotuberculosis serotype IB (strain PB1/+).